Consider the following 532-residue polypeptide: Glucose-6-phosphate isomerase (532 aa).

The active-site Proton donor is Glu-330. Active-site residues include His-359 and Lys-461.

The protein belongs to the GPI family.

It is found in the cytoplasm. The catalysed reaction is alpha-D-glucose 6-phosphate = beta-D-fructose 6-phosphate. The protein operates within carbohydrate biosynthesis; gluconeogenesis. Its pathway is carbohydrate degradation; glycolysis; D-glyceraldehyde 3-phosphate and glycerone phosphate from D-glucose: step 2/4. Catalyzes the reversible isomerization of glucose-6-phosphate to fructose-6-phosphate. The chain is Glucose-6-phosphate isomerase from Synechococcus sp. (strain CC9605).